A 137-amino-acid polypeptide reads, in one-letter code: FAD synthase (137 aa).

Residues 5–6 (TF), 10–13 (HPGH), and Asp-88 contribute to the ATP site.

This sequence belongs to the archaeal FAD synthase family. As to quaternary structure, homodimer. Requires a divalent metal cation as cofactor.

It catalyses the reaction FMN + ATP + H(+) = FAD + diphosphate. It participates in cofactor biosynthesis; FAD biosynthesis; FAD from FMN: step 1/1. Catalyzes the transfer of the AMP portion of ATP to flavin mononucleotide (FMN) to produce flavin adenine dinucleotide (FAD) coenzyme. In Archaeoglobus fulgidus (strain ATCC 49558 / DSM 4304 / JCM 9628 / NBRC 100126 / VC-16), this protein is FAD synthase.